The sequence spans 458 residues: Hepatocyte nuclear factor 3-beta (458 aa).

The interval 14–93 (DWSSYYAEPE…AGAMAGMSGS (80 aa)) is transactivation domain 1. Residues 106–113 (LSPSLSPL) carry the Nuclear localization signal motif. Thr-156 is subject to Phosphothreonine; by PKB/AKT1. Positions 159–252 (KPPYSYISLI…ENGCYLRRQK (94 aa)) form a DNA-binding region, fork-head. Phosphoserine is present on residues Ser-212 and Ser-283. The tract at residues 286 to 365 (QLGEAAGSAS…PGLPPEAHLK (80 aa)) is disordered. The span at 294–310 (ASETPAGTESPHSSASP) shows a compositional bias: polar residues. Residue Thr-301 is modified to Phosphothreonine. Phosphoserine is present on residues Ser-303, Ser-306, Ser-307, and Ser-309. A compositionally biased stretch (low complexity) spans 339-352 (PGQQQQAAAHLLGP). The tract at residues 361–458 (EAHLKPEHHY…VYSRPIMNSS (98 aa)) is transactivation domain 2. Residues Ser-437 and Ser-458 each carry the phosphoserine modification.

Binds DNA as a monomer. Binds TLE1. Interacts with FOXA1 and FOXA3. Interacts with PRKDC. Interacts with AKT1. Interacts with TET1; this interaction may recruit TET1 to specific genomic loci to mediate their demethylation. Post-translationally, phosphorylation on Thr-156 abolishes binding to target promoters and subsequent transcription activation upon insulin stimulation. As to expression, liver.

The protein resides in the nucleus. Its subcellular location is the cytoplasm. Transcription factor that is involved in embryonic development, establishment of tissue-specific gene expression and regulation of gene expression in differentiated tissues. Is thought to act as a 'pioneer' factor opening the compacted chromatin for other proteins through interactions with nucleosomal core histones and thereby replacing linker histones at target enhancer and/or promoter sites. Binds DNA with the consensus sequence 5'-[AC]A[AT]T[AG]TT[GT][AG][CT]T[CT]-3'. In embryonic development is required for notochord formation. Involved in the development of multiple endoderm-derived organ systems such as the liver, pancreas and lungs; FOXA1 and FOXA2 seem to have at least in part redundant roles. Originally described as a transcription activator for a number of liver genes such as AFP, albumin, tyrosine aminotransferase, PEPCK, etc. Interacts with the cis-acting regulatory regions of these genes. Involved in glucose homeostasis; regulates the expression of genes important for glucose sensing in pancreatic beta-cells and glucose homeostasis. Involved in regulation of fat metabolism. Acts synergistically with ONECUT1 to activate transcription of female-specific CYP2C12; the function is inhibited by growth hormone-activated STAT5B. Acts synergistically with HNF4A to activate transcription of APOA1. The sequence is that of Hepatocyte nuclear factor 3-beta (Foxa2) from Rattus norvegicus (Rat).